We begin with the raw amino-acid sequence, 352 residues long: Methylthioribose-1-phosphate isomerase (352 aa).

Substrate-binding positions include 55-57, Arg98, and Gln201; that span reads RGA. Asp242 acts as the Proton donor in catalysis. 252–253 lines the substrate pocket; it reads NK.

It belongs to the eIF-2B alpha/beta/delta subunits family. MtnA subfamily.

It carries out the reaction 5-(methylsulfanyl)-alpha-D-ribose 1-phosphate = 5-(methylsulfanyl)-D-ribulose 1-phosphate. The protein operates within amino-acid biosynthesis; L-methionine biosynthesis via salvage pathway; L-methionine from S-methyl-5-thio-alpha-D-ribose 1-phosphate: step 1/6. In terms of biological role, catalyzes the interconversion of methylthioribose-1-phosphate (MTR-1-P) into methylthioribulose-1-phosphate (MTRu-1-P). The protein is Methylthioribose-1-phosphate isomerase of Methylococcus capsulatus (strain ATCC 33009 / NCIMB 11132 / Bath).